A 587-amino-acid chain; its full sequence is Vesicular glutamate transporter 2.2 (587 aa).

The Cytoplasmic portion of the chain corresponds to M1–Y71. The helical transmembrane segment at I72–G92 threads the bilayer. Residues V93–V125 are Vesicular-facing. N-linked (GlcNAc...) asparagine glycosylation is found at N100 and N101. A helical transmembrane segment spans residues G126 to I146. At S147–R149 the chain is on the cytoplasmic side. The chain crosses the membrane as a helical span at residues L150–I170. Residues P171–C180 are Vesicular-facing. The chain crosses the membrane as a helical span at residues V181–W203. Over S204–T217 the chain is Cytoplasmic. Residues T218–V238 form a helical membrane-spanning segment. Residues Q239–S245 lie on the Vesicular side of the membrane. The helical transmembrane segment at V246 to Y266 threads the bilayer. The Cytoplasmic portion of the chain corresponds to E267–M311. A helical membrane pass occupies residues P312 to I332. At S333–G350 the chain is on the vesicular side. The helical transmembrane segment at M351–A371 threads the bilayer. Residues D372–K387 are Cytoplasmic-facing. The chain crosses the membrane as a helical span at residues I388–H408. Over S409–K410 the chain is Vesicular. Residues G411–F431 traverse the membrane as a helical segment. The Cytoplasmic segment spans residues N432–S444. Residues I445–V465 form a helical membrane-spanning segment. Topologically, residues G466–N479 are vesicular. N471 carries N-linked (GlcNAc...) asparagine glycosylation. A helical membrane pass occupies residues V480–S500. At G501–S587 the chain is on the cytoplasmic side.

The protein belongs to the major facilitator superfamily. Sodium/anion cotransporter family. VGLUT subfamily. As to expression, expressed in spinal cord.

The protein resides in the cytoplasmic vesicle. Its subcellular location is the secretory vesicle. It is found in the synaptic vesicle membrane. It localises to the membrane. The protein localises to the synapse. The protein resides in the synaptosome. Its subcellular location is the cell membrane. The enzyme catalyses L-glutamate(out) = L-glutamate(in). The catalysed reaction is 3 Na(+)(out) + phosphate(out) = 3 Na(+)(in) + phosphate(in). It catalyses the reaction phosphate(in) = phosphate(out). It carries out the reaction K(+)(in) + H(+)(out) = K(+)(out) + H(+)(in). The enzyme catalyses chloride(in) = chloride(out). Chloride channel activity is allosterically activated by lumenal H(+) and Cl(-) leading to synaptic vesicles acidification. The L-glutamate transport activity is allosterically activated by lumenal H(+) and Cl(-). The allosteric requirement for H(+) efficiently prevents non-vesicular efflux across the plasma membrane. The L-glutamate uniporter activity exhibits a biphasic dependence on chloride concentration. In terms of biological role, multifunctional transporter that transports L-glutamate as well as multiple ions such as chloride, proton, potassium, sodium and phosphate. At the synaptic vesicle membrane, mainly functions as a uniporter which transports preferentially L-glutamate but also, phosphate from the cytoplasm into synaptic vesicles at presynaptic nerve terminals of excitatory neural cells. The L-glutamate or phosphate uniporter activity is electrogenic and is driven by the proton electrochemical gradient, mainly by the electrical gradient established by the vacuolar H(+)-ATPase across the synaptic vesicle membrane. In addition, functions as a chloride channel that allows a chloride permeation through the synaptic vesicle membrane therefore affects the proton electrochemical gradient and promotes synaptic vesicles acidification. Moreover, functions as a vesicular K(+)/H(+) antiport allowing to maintain the electrical gradient and to decrease chemical gradient and therefore sustain vesicular L-glutamate uptake. The vesicular H(+)/H(+) antiport activity is electroneutral. At the plasma membrane, following exocytosis, functions as a symporter of Na(+) and phosphate from the extracellular space to the cytoplasm allowing synaptic phosphate homeostasis regulation. The symporter activity is driven by an inside negative membrane potential and is electrogenic. Also involved in the regulation of retinal hyaloid vessel regression during postnatal development. May also play a role in the endocrine L-glutamatergic system of other tissues such as pineal gland and pancreas. The protein is Vesicular glutamate transporter 2.2 (slc17a6a) of Danio rerio (Zebrafish).